The sequence spans 101 residues: Apolipoprotein C-II (101 aa).

A signal peptide spans 1-26 (MGTRYFLALFLILLVLGFKVQGVAMA). Residues 66 to 74 (TMDEKIRDI) are lipid binding. The lipoprotein lipase cofactor stretch occupies residues 78 to 101 (STAAVTTYAGIFTDQLLSLLKGDQ).

It belongs to the apolipoprotein C2 family. Proapolipoprotein C-II is synthesized as a sialic acid containing glycoprotein which is subsequently desialylated prior to its proteolytic processing. In terms of processing, proapolipoprotein C-II undergoes proteolytic cleavage of its N-terminal hexapeptide to generate apolipoprotein C-II. In bovine, proapolipoprotein C-II was found to be the minor form whereas apolipoprotein C-II was found to be the major form in plasma.

The protein resides in the secreted. In terms of biological role, component of chylomicrons, very low-density lipoproteins (VLDL), low-density lipoproteins (LDL), and high-density lipoproteins (HDL) in plasma. Plays an important role in lipoprotein metabolism as an activator of lipoprotein lipase. Both proapolipoprotein C-II and apolipoprotein C-II can activate lipoprotein lipase. This is Apolipoprotein C-II (APOC2) from Camelus dromedarius (Dromedary).